A 759-amino-acid polypeptide reads, in one-letter code: Cullin-4A (759 aa).

The interval 1–40 is disordered; that stretch reads MADEGPRKGSVSALMGRTNGLTKPAALAGGPAKPGGTGGS. Lys8 participates in a covalent cross-link: Glycyl lysine isopeptide (Lys-Gly) (interchain with G-Cter in SUMO2). A Phosphoserine modification is found at Ser10. Residues 20-31 show a composition bias toward low complexity; it reads GLTKPAALAGGP. Residue Lys33 forms a Glycyl lysine isopeptide (Lys-Gly) (interchain with G-Cter in ubiquitin) linkage. One can recognise a Cullin neddylation domain in the interval 691-750; the sequence is DRQYQIDAAIVRIMKMRKTLGHNLLVSELYNQLKFPVKPGDLKKRIESLIDRDYMERDKD. Residue Lys705 forms a Glycyl lysine isopeptide (Lys-Gly) (interchain with G-Cter in NEDD8) linkage.

This sequence belongs to the cullin family. As to quaternary structure, can self-associate. Component of multiple DCX (DDB1-CUL4-X-box) E3 ubiquitin-protein ligase complexes that seem to consist of DDB1, CUL4A or CUL4B, RBX1 and a variable substrate recognition component which seems to belong to a protein family described as DCAF (Ddb1- and Cul4-associated factor) or CDW (CUL4-DDB1-associated WD40-repeat) proteins. Component of the CSA complex (DCX(ERCC8) complex) containing ERCC8, RBX1, DDB1 and CUL4A; the CSA complex interacts with RNA polymerase II; upon UV irradiation it interacts with the COP9 signalosome and preferentially with the hyperphosphorylated form of RNA polymerase II. Component of the DCX(DET1-COP1) complex with the substrate recognition component DET1 and COP1. Component of the DCX(DDB2) complex with the substrate recognition component DDB2. Component of the DCX(DTL) complex with the putative substrate recognition component DTL. Component of DCX complexes part of the DesCEND (destruction via C-end degrons) pathway, which contain either TRPC4AP or DCAF12 as substrate-recognition component. Component of the DCX(AMBRA1) complex with the substrate recognition component AMBRA1. Interacts with DDB1, RBX1, RNF7, CDT1, TIP120A/CAND1, SKP2, CDKN1B, MDM2, TP53 and HOXA9. Interacts with DDB2; the interactions with DDB2 and CAND1 are mutually exclusive. Interacts with DCAF1, DTL, DDA1, DCAF6, DCAF4, DCAF16, DCAF17, DET1, WDTC1, DCAF5, DCAF11, WDR24A, COP1, PAFAH1B1, ERCC8, GRWD1, FBXW5, RBBP7, GNB2, WSB1, WSB2, NUP43, PWP1, FBXW8, ATG16L1, KATNB1, RBBP4, RBBP5, LRWD1 and DCAF8. May interact with WDR26, WDR51B, SNRNP40, WDR61, WDR76, WDR5. Interacts (when neddylated) with ARIH1; leading to activate the E3 ligase activity of ARIH1. The DDB1-CUL4A complex interacts with CRY1. Interacts (unneddylated form) with DCUN1D1, DCUN1D2, DCUN1D3, DCUN1D4 and DCUN1D5; these interactions promote the cullin neddylation. (Microbial infection) Interacts with murine cytomegalovirus M48. In terms of processing, neddylated; required for activity of cullin-RING-based E3 ubiquitin-protein ligase complexes. Deneddylated via its interaction with the COP9 signalosome (CSN) complex. Post-translationally, (Microbial infection) Deneddylated by murine cytomegalovirus M48 leading to a S-phase-like environment that is required for efficient replication of the viral genome. In terms of tissue distribution, expressed in oocytes (at protein level). In the ovary, also expressed in cumulus cells. Expressed in testis, spleen and kidney.

The protein operates within protein modification; protein ubiquitination. Its function is as follows. Core component of multiple cullin-RING-based E3 ubiquitin-protein ligase complexes which mediate the ubiquitination of target proteins. As a scaffold protein may contribute to catalysis through positioning of the substrate and the ubiquitin-conjugating enzyme. The E3 ubiquitin-protein ligase activity of the complex is dependent on the neddylation of the cullin subunit and is inhibited by the association of the deneddylated cullin subunit with TIP120A/CAND1. The functional specificity of the E3 ubiquitin-protein ligase complex depends on the variable substrate recognition component. DCX(DET1-COP1) directs ubiquitination of JUN. DCX(DDB2) directs ubiquitination of XPC. DCX(DDB2) ubiquitinates histones H3-H4 and is required for efficient histone deposition during replication-coupled (H3.1) and replication-independent (H3.3) nucleosome assembly, probably by facilitating the transfer of H3 from ASF1A/ASF1B to other chaperones involved in histone deposition. DCX(DTL) plays a role in PCNA-dependent polyubiquitination of CDT1 and MDM2-dependent ubiquitination of p53/TP53 in response to radiation-induced DNA damage and during DNA replication. DCX(DTL) directs autoubiquitination of DTL. In association with DDB1 and SKP2 probably is involved in ubiquitination of CDKN1B/p27kip. Is involved in ubiquitination of HOXA9. The DDB1-CUL4A-DTL E3 ligase complex regulates the circadian clock function by mediating the ubiquitination and degradation of CRY1. The DCX(ERCC8) complex (also named CSA complex) plays a role in transcription-coupled repair (TCR). A number of DCX complexes (containing either TRPC4AP or DCAF12 as substrate-recognition component) are part of the DesCEND (destruction via C-end degrons) pathway, which recognizes a C-degron located at the extreme C terminus of target proteins, leading to their ubiquitination and degradation. With CUL4B, contributes to ribosome biogenesis. The DCX(AMBRA1) complex is a master regulator of the transition from G1 to S cell phase by mediating ubiquitination of phosphorylated cyclin-D (CCND1, CCND2 and CCND3). The DCX(AMBRA1) complex also acts as a regulator of Cul5-RING (CRL5) E3 ubiquitin-protein ligase complexes by mediating ubiquitination and degradation of Elongin-C (ELOC) component of CRL5 complexes. The protein is Cullin-4A of Mus musculus (Mouse).